Here is a 31-residue protein sequence, read N- to C-terminus: Photosystem II reaction center protein M (31 aa).

Residues Ile-5–Ile-25 form a helical membrane-spanning segment.

This sequence belongs to the PsbM family. PSII is composed of 1 copy each of membrane proteins PsbA, PsbB, PsbC, PsbD, PsbE, PsbF, PsbH, PsbI, PsbJ, PsbK, PsbL, PsbM, PsbT, PsbX, PsbY, PsbZ, Psb30/Ycf12, at least 3 peripheral proteins of the oxygen-evolving complex and a large number of cofactors. It forms dimeric complexes.

It is found in the plastid membrane. One of the components of the core complex of photosystem II (PSII). PSII is a light-driven water:plastoquinone oxidoreductase that uses light energy to abstract electrons from H(2)O, generating O(2) and a proton gradient subsequently used for ATP formation. It consists of a core antenna complex that captures photons, and an electron transfer chain that converts photonic excitation into a charge separation. This subunit is found at the monomer-monomer interface. This chain is Photosystem II reaction center protein M, found in Cuscuta exaltata (Tall dodder).